A 204-amino-acid polypeptide reads, in one-letter code: Phospholipase D (204 aa).

A signal peptide spans 1–22 (MKSKNNKFIAMSIPFILGTALG). Residues 142 to 169 (VPGIAHNKVIIIDKKKVITGSFNFTVAA) form the PLD phosphodiesterase domain. Active-site residues include H147, K149, and D154.

This sequence belongs to the phospholipase D family. Homodimer.

The protein resides in the secreted. It carries out the reaction a 1,2-diacyl-sn-glycero-3-phosphocholine + H2O = a 1,2-diacyl-sn-glycero-3-phosphate + choline + H(+). Functionally, could be a virulence factor. This is Phospholipase D (pld) from Rickettsia typhi (strain ATCC VR-144 / Wilmington).